A 204-amino-acid chain; its full sequence is Ribosome maturation factor RimP (204 aa).

Positions 176-204 are disordered; sequence GNFDESQFDEIEESEGEEADEAEQPPTKH. Over residues 181-198 the composition is skewed to acidic residues; the sequence is SQFDEIEESEGEEADEAE.

This sequence belongs to the RimP family.

Its subcellular location is the cytoplasm. Its function is as follows. Required for maturation of 30S ribosomal subunits. The polypeptide is Ribosome maturation factor RimP (Cereibacter sphaeroides (strain ATCC 17029 / ATH 2.4.9) (Rhodobacter sphaeroides)).